A 7756-amino-acid polypeptide reads, in one-letter code: Linear gramicidin synthase subunit C (7756 aa).

Carrier domains follow at residues 977-1052 (EPRN…AALQ), 2042-2116 (APAT…ADSS), 3557-3632 (APRT…ASLL), 4621-4695 (APAT…TVTD), 6141-6216 (APRK…AGLL), and 7200-7274 (APET…GDSV). 6 positions are modified to O-(pantetheine 4'-phosphoryl)serine: serine 1012, serine 2077, serine 3592, serine 4656, serine 6176, and serine 7235.

It belongs to the ATP-dependent AMP-binding enzyme family. As to quaternary structure, large multienzyme complex composed of 4 subunits; LgrA, LgrB, LgrC and LgrD. Requires pantetheine 4'-phosphate as cofactor.

In terms of biological role, activates the 7th to 12th amino acids (Val, D-Val, Trp, D-Leu, Xaa and D-Leu) in linear gramicidin and catalyzes the formation of the peptide bond between them. This enzyme is also responsible for the epimerization of the 8th (D-Val), the 10th (D-Leu) and 12th (D-Leu) amino acids. The 11th (Xaa) amino acid is Trp in linear gramicidin A; Phe in linear gramicidin B and Tyr in linear gramicidin C. The protein is Linear gramicidin synthase subunit C (lgrC) of Brevibacillus parabrevis.